A 142-amino-acid polypeptide reads, in one-letter code: Putative pre-16S rRNA nuclease (142 aa).

This sequence belongs to the YqgF nuclease family.

Its subcellular location is the cytoplasm. Could be a nuclease involved in processing of the 5'-end of pre-16S rRNA. The chain is Putative pre-16S rRNA nuclease from Staphylococcus saprophyticus subsp. saprophyticus (strain ATCC 15305 / DSM 20229 / NCIMB 8711 / NCTC 7292 / S-41).